Reading from the N-terminus, the 213-residue chain is Small ribosomal subunit protein uS3 (213 aa).

One can recognise a KH type-2 domain in the interval 38–106 (IREYLENRLS…RVHINIVEIK (69 aa)).

This sequence belongs to the universal ribosomal protein uS3 family. Part of the 30S ribosomal subunit. Forms a tight complex with proteins S10 and S14.

Functionally, binds the lower part of the 30S subunit head. Binds mRNA in the 70S ribosome, positioning it for translation. This is Small ribosomal subunit protein uS3 from Oceanobacillus iheyensis (strain DSM 14371 / CIP 107618 / JCM 11309 / KCTC 3954 / HTE831).